The primary structure comprises 252 residues: Protein HEAT-INDUCED TAS1 TARGET 2 (252 aa).

Belongs to the heat induced plant HTT protein family. As to expression, expressed ubiquitously, including in seedlings, leaves, stems, inflorescences and siliques.

The protein localises to the cytoplasm. The protein resides in the nucleus. Functionally, mediates both basal and acquired thermotolerance via HSFA1s-directed pathways (e.g. HSFA1A, HSFA1B, and HSFA1D). Triggers the expression of HSFA1A and HSFA1B. The chain is Protein HEAT-INDUCED TAS1 TARGET 2 from Arabidopsis thaliana (Mouse-ear cress).